Reading from the N-terminus, the 393-residue chain is Bifunctional enzyme Fae/Hps (393 aa).

A formaldehyde-activating enzyme region spans residues M1–V161. H17 functions as the Proton donor in the catalytic mechanism. D19, L48, K66, T68, and Q83 together coordinate substrate. Residues M162–F393 are 3-hexulose-6-phosphate synthase.

This sequence in the N-terminal section; belongs to the formaldehyde-activating enzyme family. The protein in the C-terminal section; belongs to the HPS/KGPDC family. HPS subfamily.

The catalysed reaction is 5,6,7,8-tetrahydromethanopterin + formaldehyde = 5,10-methylenetetrahydromethanopterin + H2O. The enzyme catalyses D-ribulose 5-phosphate + formaldehyde = D-arabino-hex-3-ulose 6-phosphate. It participates in carbohydrate biosynthesis; D-ribose 5-phosphate biosynthesis. Functionally, catalyzes the condensation of formaldehyde with tetrahydromethanopterin (H(4)MPT) to 5,10-methylenetetrahydromethanopterin. Its function is as follows. Catalyzes the reversible formation of ribulose-5-phosphate and formaldehyde from 3-hexulose-6-phosphate. The protein is Bifunctional enzyme Fae/Hps of Methanosphaerula palustris (strain ATCC BAA-1556 / DSM 19958 / E1-9c).